Reading from the N-terminus, the 687-residue chain is Bifunctional lysine-specific demethylase and histidyl-hydroxylase NO66 (687 aa).

The tract at residues 1–174 (MSDKNKKVSA…RSCPLPSKKN (174 aa)) is disordered. Positions 23 to 32 (DVQKGTKNSD) are enriched in basic and acidic residues. Low complexity-rich tracts occupy residues 33 to 50 (KNGA…SKNG) and 58 to 74 (KKNG…SSSS). Acidic residues predominate over residues 75–96 (GEDEEDDSTDSSDEYESSESGE). Polar residues-rich tracts occupy residues 100-116 (LNSH…ANTR) and 136-156 (RTSS…QQPK). In terms of domain architecture, JmjC spans 347 to 483 (NPSSYLVQLR…NLMEKLMPLV (137 aa)). The Fe cation site is built by H387, D389, and H449.

Belongs to the ROX family. NO66 subfamily. The cofactor is Fe(2+).

The protein resides in the nucleus. The enzyme catalyses N(6),N(6)-dimethyl-L-lysyl(36)-[histone H3] + 2 2-oxoglutarate + 2 O2 = L-lysyl(36)-[histone H3] + 2 formaldehyde + 2 succinate + 2 CO2. Its function is as follows. Oxygenase that can act as both a histone lysine demethylase and a ribosomal histidine hydroxylase. Specifically demethylates 'Lys-4' (H3K4me) and 'Lys-36' (H3K36me) of histone H3, thereby playing a central role in histone code. This is Bifunctional lysine-specific demethylase and histidyl-hydroxylase NO66 from Drosophila persimilis (Fruit fly).